A 328-amino-acid chain; its full sequence is Porphobilinogen deaminase (328 aa).

S-(dipyrrolylmethanemethyl)cysteine is present on Cys-250.

This sequence belongs to the HMBS family. In terms of assembly, monomer. It depends on dipyrromethane as a cofactor.

The enzyme catalyses 4 porphobilinogen + H2O = hydroxymethylbilane + 4 NH4(+). Its pathway is porphyrin-containing compound metabolism; protoporphyrin-IX biosynthesis; coproporphyrinogen-III from 5-aminolevulinate: step 2/4. Its function is as follows. Tetrapolymerization of the monopyrrole PBG into the hydroxymethylbilane pre-uroporphyrinogen in several discrete steps. The polypeptide is Porphobilinogen deaminase (Burkholderia ambifaria (strain ATCC BAA-244 / DSM 16087 / CCUG 44356 / LMG 19182 / AMMD) (Burkholderia cepacia (strain AMMD))).